Consider the following 66-residue polypeptide: Large ribosomal subunit protein bL35 (66 aa).

2 stretches are compositionally biased toward basic residues: residues 1 to 26 (MPKMKTHKGAAKRFKKTGSGKLKRSH) and 38 to 48 (QKQKRKLRKSA). Positions 1–48 (MPKMKTHKGAAKRFKKTGSGKLKRSHAFTSHLFANKSQKQKRKLRKSA) are disordered.

Belongs to the bacterial ribosomal protein bL35 family.

The polypeptide is Large ribosomal subunit protein bL35 (Halalkalibacterium halodurans (strain ATCC BAA-125 / DSM 18197 / FERM 7344 / JCM 9153 / C-125) (Bacillus halodurans)).